Consider the following 379-residue polypeptide: Homoserine O-succinyltransferase (379 aa).

Positions 48–357 (NAVLICHALS…SAHGHDAFLM (310 aa)) constitute an AB hydrolase-1 domain. The active-site Nucleophile is S154. R224 contributes to the substrate binding site. Residues D319 and H352 contribute to the active site. Substrate is bound at residue D353.

It belongs to the AB hydrolase superfamily. MetX family. In terms of assembly, homodimer.

The protein resides in the cytoplasm. It carries out the reaction L-homoserine + succinyl-CoA = O-succinyl-L-homoserine + CoA. Its pathway is amino-acid biosynthesis; L-methionine biosynthesis via de novo pathway; O-succinyl-L-homoserine from L-homoserine: step 1/1. Its function is as follows. Transfers a succinyl group from succinyl-CoA to L-homoserine, forming succinyl-L-homoserine. In Neisseria meningitidis serogroup A / serotype 4A (strain DSM 15465 / Z2491), this protein is Homoserine O-succinyltransferase.